The following is a 306-amino-acid chain: Oxygen-dependent coproporphyrinogen-III oxidase (306 aa).

Serine 99 lines the substrate pocket. Residues histidine 103 and histidine 113 each contribute to the a divalent metal cation site. Residue histidine 113 is the Proton donor of the active site. Position 115–117 (115–117) interacts with substrate; it reads NVR. Positions 152 and 182 each coordinate a divalent metal cation. An important for dimerization region spans residues 247 to 282; it reads YVEFNLVFDRGTLFGLQSGGRTESILMSMPPVANWR. 265-267 lines the substrate pocket; sequence GGR.

Belongs to the aerobic coproporphyrinogen-III oxidase family. As to quaternary structure, homodimer. Requires a divalent metal cation as cofactor.

It is found in the cytoplasm. It carries out the reaction coproporphyrinogen III + O2 + 2 H(+) = protoporphyrinogen IX + 2 CO2 + 2 H2O. The protein operates within porphyrin-containing compound metabolism; protoporphyrin-IX biosynthesis; protoporphyrinogen-IX from coproporphyrinogen-III (O2 route): step 1/1. Its function is as follows. Involved in the heme biosynthesis. Catalyzes the aerobic oxidative decarboxylation of propionate groups of rings A and B of coproporphyrinogen-III to yield the vinyl groups in protoporphyrinogen-IX. This is Oxygen-dependent coproporphyrinogen-III oxidase from Burkholderia ambifaria (strain MC40-6).